A 243-amino-acid chain; its full sequence is Probable fructoselysine utilization operon transcriptional repressor (243 aa).

Residues 10–78 (QLLYATVRQR…QGKGTFVQSQ (69 aa)) form the HTH gntR-type domain. A DNA-binding region (H-T-H motif) is located at residues 38-57 (ENELCTQYNVSRITIRKAIS).

It participates in carbohydrate metabolism; fructoselysine degradation [regulation]. Functionally, may regulate the transcription of the frlABCDR operon, involved in the utilization of fructoselysine and psicoselysine. The polypeptide is Probable fructoselysine utilization operon transcriptional repressor (frlR) (Escherichia coli O157:H7).